Here is a 166-residue protein sequence, read N- to C-terminus: Small ribosomal subunit protein eS10 (166 aa).

The tract at residues 95–166 (RRQTRPETAR…FGRGRGQQPQ (72 aa)) is disordered. The span at 98–129 (TRPETARPRPKGLEGERPARLARGEGDRDAYR) shows a compositional bias: basic and acidic residues. A compositionally biased stretch (low complexity) spans 143 to 154 (AGAGAATEFQFR). Positions 155 to 166 (GGFGRGRGQQPQ) are enriched in gly residues.

This sequence belongs to the eukaryotic ribosomal protein eS10 family. In terms of assembly, component of the small ribosomal subunit.

The protein resides in the cytoplasm. It is found in the nucleus. Its subcellular location is the nucleolus. Functionally, component of the 40S ribosomal subunit. The ribosome is a large ribonucleoprotein complex responsible for the synthesis of proteins in the cell. This Ictalurus punctatus (Channel catfish) protein is Small ribosomal subunit protein eS10 (rps10).